A 459-amino-acid polypeptide reads, in one-letter code: Ribulose bisphosphate carboxylase large chain (459 aa).

Substrate is bound by residues N98 and T148. K150 (proton acceptor) is an active-site residue. K152 serves as a coordination point for substrate. 3 residues coordinate Mg(2+): K176, D178, and E179. At K176 the chain carries N6-carboxylysine. The active-site Proton acceptor is H268. Substrate contacts are provided by R269, H301, and S353.

Belongs to the RuBisCO large chain family. Type I subfamily. Heterohexadecamer of 8 large chains and 8 small chains. Requires Mg(2+) as cofactor.

The protein resides in the plastid. It is found in the chloroplast. It carries out the reaction 2 (2R)-3-phosphoglycerate + 2 H(+) = D-ribulose 1,5-bisphosphate + CO2 + H2O. The enzyme catalyses D-ribulose 1,5-bisphosphate + O2 = 2-phosphoglycolate + (2R)-3-phosphoglycerate + 2 H(+). Its function is as follows. RuBisCO catalyzes two reactions: the carboxylation of D-ribulose 1,5-bisphosphate, the primary event in carbon dioxide fixation, as well as the oxidative fragmentation of the pentose substrate in the photorespiration process. Both reactions occur simultaneously and in competition at the same active site. In Calyptrosphaera sphaeroidea, this protein is Ribulose bisphosphate carboxylase large chain (rbcL).